Here is a 920-residue protein sequence, read N- to C-terminus: Dynamin-B (920 aa).

A disordered region spans residues 65–84 (NSNNNNNNNNNNKINKNNNN). Residues 154–448 (EITLPQIIVV…LTKHIRDTFP (295 aa)) form the Dynamin-type G domain. The interval 164 to 171 (GSQSSGKS) is G1 motif. 164–172 (GSQSSGKSS) is a GTP binding site. The G2 motif stretch occupies residues 190-192 (VTR). Positions 204-241 (TTSRNNVNENEDEDEDDNYYDNDNDDNSLEEWGEFGHT) are disordered. A compositionally biased stretch (acidic residues) spans 212–236 (ENEDEDEDDNYYDNDNDDNSLEEWG). The tract at residues 290–293 (DLPG) is G3 motif. The interval 359–362 (TKLD) is G4 motif. GTP is bound by residues 359 to 365 (TKLDLMD) and 390 to 393 (NRSQ). Residues 389-392 (VNRS) are G5 motif. The tract at residues 680–790 (FQSTSSTSSS…EIQIQQQQQQ (111 aa)) is disordered. Low complexity-rich tracts occupy residues 681–705 (QSTSSTSSSPTSSSSSLPLPQNSNP) and 724–751 (QIKQQQQQQQQQQQQSYQQQQQQQQKQQ). The stretch at 724-751 (QIKQQQQQQQQQQQQSYQQQQQQQQKQQ) forms a coiled coil. The segment covering 765–774 (PPSPPSPPQP) has biased composition (pro residues). The segment covering 775 to 790 (KQQQSHEIQIQQQQQQ) has biased composition (low complexity). Positions 825–916 (IYLLRRLLLA…SLSQSENSDL (92 aa)) constitute a GED domain.

It belongs to the TRAFAC class dynamin-like GTPase superfamily. Dynamin/Fzo/YdjA family.

It localises to the cytoplasm. In terms of biological role, enzyme hydrolyzing GTP. This Dictyostelium discoideum (Social amoeba) protein is Dynamin-B (dymB).